Here is a 149-residue protein sequence, read N- to C-terminus: Protein TraJ (149 aa).

The protein resides in the cell membrane. In terms of biological role, this protein is essential for positively regulating the expression of transfer genes that are involved in the conjugal transfer of DNA between bacterial cells. This is Protein TraJ (traJ) from Escherichia coli.